Here is a 743-residue protein sequence, read N- to C-terminus: Phosphoribosylformylglycinamidine synthase subunit PurL (743 aa).

H50 is an active-site residue. Residues Y53 and K92 each contribute to the ATP site. A Mg(2+)-binding site is contributed by E94. Substrate contacts are provided by residues 95-98 (SHNH) and R117. H96 acts as the Proton acceptor in catalysis. A Mg(2+)-binding site is contributed by D118. Substrate is bound at residue Q241. D269 is a Mg(2+) binding site. 313–315 (ESQ) is a binding site for substrate. ATP is bound by residues D494 and G531. A Mg(2+)-binding site is contributed by N532. S534 is a binding site for substrate.

Belongs to the FGAMS family. As to quaternary structure, monomer. Part of the FGAM synthase complex composed of 1 PurL, 1 PurQ and 2 PurS subunits.

The protein resides in the cytoplasm. The enzyme catalyses N(2)-formyl-N(1)-(5-phospho-beta-D-ribosyl)glycinamide + L-glutamine + ATP + H2O = 2-formamido-N(1)-(5-O-phospho-beta-D-ribosyl)acetamidine + L-glutamate + ADP + phosphate + H(+). The protein operates within purine metabolism; IMP biosynthesis via de novo pathway; 5-amino-1-(5-phospho-D-ribosyl)imidazole from N(2)-formyl-N(1)-(5-phospho-D-ribosyl)glycinamide: step 1/2. Functionally, part of the phosphoribosylformylglycinamidine synthase complex involved in the purines biosynthetic pathway. Catalyzes the ATP-dependent conversion of formylglycinamide ribonucleotide (FGAR) and glutamine to yield formylglycinamidine ribonucleotide (FGAM) and glutamate. The FGAM synthase complex is composed of three subunits. PurQ produces an ammonia molecule by converting glutamine to glutamate. PurL transfers the ammonia molecule to FGAR to form FGAM in an ATP-dependent manner. PurS interacts with PurQ and PurL and is thought to assist in the transfer of the ammonia molecule from PurQ to PurL. This is Phosphoribosylformylglycinamidine synthase subunit PurL from Sinorhizobium medicae (strain WSM419) (Ensifer medicae).